We begin with the raw amino-acid sequence, 416 residues long: Enterobactin exporter EntS (416 aa).

Over 1-21 (MNRQSWLLNLSLLKTHPAFRA) the chain is Cytoplasmic. The chain crosses the membrane as a helical span at residues 22 to 42 (VFLARFISIVSLGLLGVAVPV). Topologically, residues 43 to 55 (QIQMMTHSTWQVG) are periplasmic. Residues 56-76 (LSVTLTGSAMFVGLMVGGVLA) form a helical membrane-spanning segment. Residues 77 to 83 (DRYERKK) are Cytoplasmic-facing. Residues 84–104 (VILLARGTCGIGFIGLCLNAL) form a helical membrane-spanning segment. Topologically, residues 105 to 109 (LPEPS) are periplasmic. Residues 110-130 (LLAIYLLGLWDGFFASLGVTA) traverse the membrane as a helical segment. The Cytoplasmic portion of the chain corresponds to 131 to 156 (LLAATPALVGRENLMQAGAITMLTVR). The helical transmembrane segment at 157–177 (LGSVISPMLGGVLLATGGVAW) threads the bilayer. N178 is a topological domain (periplasmic). The helical transmembrane segment at 179 to 199 (YGLAAAGTFITLLPLLSLPAL) threads the bilayer. Topologically, residues 200-218 (PPPPQPREHPLKSLLAAFR) are cytoplasmic. The chain crosses the membrane as a helical span at residues 219–239 (FLLSSPLIGGIALLGGLLTMA). At 240 to 256 (SAVRVLYPALAINWHMS) the chain is on the periplasmic side. A helical transmembrane segment spans residues 257–277 (AAQIGLLYAAIPLGAAVGALT). Residues 278–287 (SGQLAHSVRP) lie on the Cytoplasmic side of the membrane. Residues 288 to 307 (GLLMLVSTVGSFLAIGVFGL) form a helical membrane-spanning segment. At 308–313 (MPVWLL) the chain is on the periplasmic side. A helical transmembrane segment spans residues 314 to 336 (GVICLALFGWLSAISSLLQYTLL). At 337–356 (QTQTPEAMLGRINGLWTAQN) the chain is on the cytoplasmic side. The chain crosses the membrane as a helical span at residues 357 to 377 (VTGDAIGAALLGGLGAMMTPV). A378 is a topological domain (periplasmic). Residues 379–399 (SASVSGFGLVIVGLLLMLLLG) form a helical membrane-spanning segment. The Cytoplasmic portion of the chain corresponds to 400–416 (ELRRFRQPPPVPDGAPL).

The protein belongs to the major facilitator superfamily. EntS (TC 2.A.1.38) family.

The protein localises to the cell inner membrane. Functionally, component of an export pathway for enterobactin. The polypeptide is Enterobactin exporter EntS (Citrobacter koseri (strain ATCC BAA-895 / CDC 4225-83 / SGSC4696)).